Reading from the N-terminus, the 236-residue chain is MKYKLLPCLLAIFLTGCDRTEVTLSFTPEMASFSNEFDFDPLRGPVKDFTQTLMDEQGEVTKRVSGTLSEEGCFDSLELLDLENNTVVALVLDANYYRDAQTLEKRVRLQGKCQLAELPSAGVSWETDDNGFVIKASSKQMQMEYRYDDQGYPLGKTTKSHDKTLSVSATPSTDPIKKLDYTAVTILNNQRVGNVKQSCEYDSHANPVDCQLIIVDEGVKPAIERVYTIKNTIDYY.

Residues 1 to 16 form the signal peptide; it reads MKYKLLPCLLAIFLTG. Cysteine 17 carries the N-palmitoyl cysteine lipid modification. Cysteine 17 carries S-diacylglycerol cysteine lipidation.

The protein belongs to the UPF0257 family.

It is found in the cell membrane. In Escherichia coli O17:K52:H18 (strain UMN026 / ExPEC), this protein is UPF0257 lipoprotein YnfC.